The sequence spans 305 residues: Protein hrde-2 (305 aa).

2 disordered regions span residues 211–233 (AEMVPSNTTGSSGSPMSTAPVPA) and 267–305 (EMSNDEYSPDESENDENEYDYENAARYDDGYDEGHEYCQ). Over residues 215–227 (PSNTTGSSGSPMS) the composition is skewed to polar residues. Positions 268–287 (MSNDEYSPDESENDENEYDY) are enriched in acidic residues. A compositionally biased stretch (basic and acidic residues) spans 289–305 (NAARYDDGYDEGHEYCQ).

In terms of tissue distribution, expressed throughout the male and female germline.

Its subcellular location is the nucleus. Plays a role in germline RNA interference (RNAi), and in particular is required for piwi-interacting RNA (piRNA) gene silencing. Facilitates the binding of the argonaut protein hrde-1 to small interfering RNAs (siRNAs) targets that are required for transgenerational epigenetic inheritance and germline immortality. The sequence is that of Protein hrde-2 from Caenorhabditis elegans.